A 572-amino-acid polypeptide reads, in one-letter code: Potassium-transporting ATPase potassium-binding subunit (572 aa).

11 helical membrane-spanning segments follow: residues 5–25 (LAAG…YVPL), 71–91 (VGYT…LYVL), 97–117 (VLPL…NTAV), 142–162 (GLAV…VALI), 188–208 (ILLP…TIQS), 258–278 (PTPL…VCLT), 292–312 (LTVL…VTWA), 387–407 (GLYG…LLVG), 422–442 (ITMA…GTGI), 500–520 (LGMA…ALAG), and 548–568 (GTVL…GPIA).

Belongs to the KdpA family. The system is composed of three essential subunits: KdpA, KdpB and KdpC.

Its subcellular location is the cell membrane. Functionally, part of the high-affinity ATP-driven potassium transport (or Kdp) system, which catalyzes the hydrolysis of ATP coupled with the electrogenic transport of potassium into the cytoplasm. This subunit binds the extracellular potassium ions and delivers the ions to the membrane domain of KdpB through an intramembrane tunnel. The sequence is that of Potassium-transporting ATPase potassium-binding subunit from Mycobacteroides abscessus (strain ATCC 19977 / DSM 44196 / CCUG 20993 / CIP 104536 / JCM 13569 / NCTC 13031 / TMC 1543 / L948) (Mycobacterium abscessus).